Here is a 903-residue protein sequence, read N- to C-terminus: Protein translocase subunit SecA (903 aa).

ATP-binding positions include Gln89, 107–111 (GEGKT), and Asp502. Cys886, Cys888, Cys897, and His898 together coordinate Zn(2+).

This sequence belongs to the SecA family. As to quaternary structure, monomer and homodimer. Part of the essential Sec protein translocation apparatus which comprises SecA, SecYEG and auxiliary proteins SecDF-YajC and YidC. It depends on Zn(2+) as a cofactor.

It localises to the cell inner membrane. Its subcellular location is the cytoplasm. The enzyme catalyses ATP + H2O + cellular proteinSide 1 = ADP + phosphate + cellular proteinSide 2.. Functionally, part of the Sec protein translocase complex. Interacts with the SecYEG preprotein conducting channel. Has a central role in coupling the hydrolysis of ATP to the transfer of proteins into and across the cell membrane, serving both as a receptor for the preprotein-SecB complex and as an ATP-driven molecular motor driving the stepwise translocation of polypeptide chains across the membrane. This Sinorhizobium medicae (strain WSM419) (Ensifer medicae) protein is Protein translocase subunit SecA.